A 620-amino-acid polypeptide reads, in one-letter code: Glutathione-regulated potassium-efflux system protein KefC (620 aa).

Transmembrane regions (helical) follow at residues 4-24 (HTLLQALIYLGSAALIVPIAV), 26-46 (LGLGSVLGYLIAGCIIGPWGL), 54-74 (SILHFAEIGVVLMLFVIGLEL), 90-110 (GALQMVVCGGLIGLFCMFLGL), 114-134 (VAELIGMTLALSSTAIAMQAM), 149-169 (FAVLLFQDIAAIPLVAMIPLL), 178-198 (LGAFALSALKVAGALALVVLL), 218-238 (VFSAVALFLVFGFGLLLEEVG), 270-290 (GLLLGLFFIGVGMSIDFGTLV), 294-314 (LRILLLLAGFLTIKIVMLWLV), 327-347 (WFAVLLGQGSEFAFVVFGAAQ), and 359-379 (ALTLAVALSMAATPIFLVLLT). The RCK N-terminal domain maps to 399–518 (QPRVIVAGFG…AGVAMPERET (120 aa)). A disordered region spans residues 599 to 620 (QGTAEGKHSGEAADEPEVKPSI).

This sequence belongs to the monovalent cation:proton antiporter 2 (CPA2) transporter (TC 2.A.37) family. KefC subfamily. As to quaternary structure, homodimer. Interacts with the regulatory subunit KefF.

Its subcellular location is the cell inner membrane. Pore-forming subunit of a potassium efflux system that confers protection against electrophiles. Catalyzes K(+)/H(+) antiport. This Salmonella schwarzengrund (strain CVM19633) protein is Glutathione-regulated potassium-efflux system protein KefC.